The primary structure comprises 205 residues: Ribosomal RNA small subunit methyltransferase G (205 aa).

Residues G76, L81, 127–128 (IE), and R140 contribute to the S-adenosyl-L-methionine site.

It belongs to the methyltransferase superfamily. RNA methyltransferase RsmG family.

It is found in the cytoplasm. It catalyses the reaction guanosine(527) in 16S rRNA + S-adenosyl-L-methionine = N(7)-methylguanosine(527) in 16S rRNA + S-adenosyl-L-homocysteine. In terms of biological role, specifically methylates the N7 position of guanine in position 527 of 16S rRNA. The sequence is that of Ribosomal RNA small subunit methyltransferase G from Francisella tularensis subsp. tularensis (strain FSC 198).